The primary structure comprises 303 residues: Formylglycine-generating enzyme (303 aa).

Residues Asn188, Ile189, Asp202, Tyr204, Asn222, Val223, Gly225, and Val227 each coordinate Ca(2+). Residues Cys269 and Cys274 each contribute to the Cu(+) site.

The protein belongs to the sulfatase-modifying factor family. Requires Cu(+) as cofactor.

It carries out the reaction L-cysteinyl-[sulfatase] + 2 a thiol + O2 = an organic disulfide + 3-oxo-L-alanyl-[sulfatase] + hydrogen sulfide + H2O + H(+). The protein operates within protein modification; sulfatase oxidation. Functionally, oxidase that catalyzes the conversion of cysteine to 3-oxoalanine on target proteins. 3-oxoalanine modification, which is also named formylglycine (fGly), occurs in the maturation of arylsulfatases and some alkaline phosphatases that use the hydrated form of 3-oxoalanine as a catalytic nucleophile. In Thermomonospora curvata (strain ATCC 19995 / DSM 43183 / JCM 3096 / KCTC 9072 / NBRC 15933 / NCIMB 10081 / Henssen B9), this protein is Formylglycine-generating enzyme.